The following is a 276-amino-acid chain: CTD small phosphatase-like protein (276 aa).

Residues 1 to 31 (MDGPAIITQVTNPKEDEARSPVAGEKASQRN) form a disordered region. The region spanning 102–260 (LDYGKKCVVI…LDLIPFFEGL (159 aa)) is the FCP1 homology domain. Aspartate 112 serves as the catalytic 4-aspartylphosphate intermediate. Positions 112, 114, and 223 each coordinate Mg(2+). Aspartate 114 serves as the catalytic Proton donor.

In terms of assembly, monomer. Interacts with REST. Mg(2+) is required as a cofactor.

The protein localises to the nucleus. It carries out the reaction O-phospho-L-seryl-[protein] + H2O = L-seryl-[protein] + phosphate. The enzyme catalyses O-phospho-L-threonyl-[protein] + H2O = L-threonyl-[protein] + phosphate. Functionally, preferentially catalyzes the dephosphorylation of 'Ser-5' within the tandem 7 residue repeats in the C-terminal domain (CTD) of the largest RNA polymerase II subunit POLR2A. Negatively regulates RNA polymerase II transcription, possibly by controlling the transition from initiation/capping to processive transcript elongation. Recruited by REST to neuronal genes that contain RE-1 elements, leading to neuronal gene silencing in non-neuronal cells. This is CTD small phosphatase-like protein (Ctdspl) from Mus musculus (Mouse).